We begin with the raw amino-acid sequence, 257 residues long: 5'-nucleotidase SurE (257 aa).

Positions 9, 10, 40, and 93 each coordinate a divalent metal cation.

Belongs to the SurE nucleotidase family. Requires a divalent metal cation as cofactor.

It localises to the cytoplasm. The enzyme catalyses a ribonucleoside 5'-phosphate + H2O = a ribonucleoside + phosphate. In terms of biological role, nucleotidase that shows phosphatase activity on nucleoside 5'-monophosphates. This Campylobacter hominis (strain ATCC BAA-381 / DSM 21671 / CCUG 45161 / LMG 19568 / NCTC 13146 / CH001A) protein is 5'-nucleotidase SurE.